Here is a 188-residue protein sequence, read N- to C-terminus: MIMGNLELFLIAVGLSMDAFAVAISKGLSMRRMSYKTALITGLFFGGFQALMPLIGFLLGTRFESYITAIDHWIAFILLSLIGLNMIKESRGPCEIIEDRFNLKDMIILSLATSIDALAVGITFAFLHVDIVPAVSMIGVTTFLFSFLGVKIGNVFGECYKARAELAGGVILILMGLKILLEHLGFLG.

Transmembrane regions (helical) follow at residues 2–22 (IMGNLELFLIAVGLSMDAFAV), 39–59 (LITGLFFGGFQALMPLIGFLL), 67–87 (ITAIDHWIAFILLSLIGLNMI), 107–127 (IILSLATSIDALAVGITFAFL), 129–149 (VDIVPAVSMIGVTTFLFSFLG), and 166–186 (LAGGVILILMGLKILLEHLGF).

The protein belongs to the MntP (TC 9.B.29) family.

It is found in the cell membrane. In terms of biological role, probably functions as a manganese efflux pump. The sequence is that of Putative manganese efflux pump MntP from Desulfitobacterium hafniense (strain Y51).